A 269-amino-acid chain; its full sequence is Small ribosomal subunit protein uS2 (269 aa).

Residues 235 to 269 are disordered; the sequence is FDAKNPLKPQNYNTLNKRPYQDSPRKPSYQNQNQR.

This sequence belongs to the universal ribosomal protein uS2 family.

The polypeptide is Small ribosomal subunit protein uS2 (Aster yellows witches'-broom phytoplasma (strain AYWB)).